Here is a 108-residue protein sequence, read N- to C-terminus: Transmembrane protein 213 (108 aa).

A signal peptide spans 1–27 (MKRLHLAPWTSLVLGLAFLSFHPVYLA). At 28 to 71 (EASSGSNSTSTVHHPENLETLEQCPNVDFCPQAARCCHTGVDEY) the chain is on the extracellular side. Residue N34 is glycosylated (N-linked (GlcNAc...) asparagine). The chain crosses the membrane as a helical span at residues 72–92 (GWIAAAVGWSLLFLTLILLCV). Over 93–108 (DKLMKLTPDESKDLQA) the chain is Cytoplasmic.

The protein localises to the membrane. The sequence is that of Transmembrane protein 213 (TMEM213) from Bos taurus (Bovine).